Reading from the N-terminus, the 548-residue chain is Chaperonin GroEL (548 aa).

ATP-binding positions include 30 to 33 (TLGP), Lys-51, 87 to 91 (DGTTT), Gly-415, 479 to 481 (NAA), and Asp-495.

The protein belongs to the chaperonin (HSP60) family. As to quaternary structure, forms a cylinder of 14 subunits composed of two heptameric rings stacked back-to-back. Interacts with the co-chaperonin GroES.

It is found in the cytoplasm. The enzyme catalyses ATP + H2O + a folded polypeptide = ADP + phosphate + an unfolded polypeptide.. Functionally, together with its co-chaperonin GroES, plays an essential role in assisting protein folding. The GroEL-GroES system forms a nano-cage that allows encapsulation of the non-native substrate proteins and provides a physical environment optimized to promote and accelerate protein folding. The polypeptide is Chaperonin GroEL (Klebsiella pneumoniae subsp. pneumoniae (strain ATCC 700721 / MGH 78578)).